We begin with the raw amino-acid sequence, 304 residues long: DCN1-like protein 3 (304 aa).

2 disordered regions span residues 1-87 (MGQC…EESS) and 284-304 (EGEG…EEQT). Gly2 carries the N-myristoyl glycine lipid modification. The region spanning 86-278 (SSLQRLEELF…LFDTFVEWEM (193 aa)) is the DCUN1 domain.

In terms of assembly, part of a complex containing DCUN1D3, CUL3 and RBX1. Interacts (via the DCUN1 domain) with the unneddylated cullins: interacts with CUL1, CUL2, CUL3, CUL4A, CUL4B and CUL5; these interactions promote the cullin neddylation and the identity of the cullin dictates the affinity of the interaction. Interacts preferentially with CUL3; this interaction triggers the relocalization of CUL3 to the cell membrane where CUL3 is neddylated. Interacts (via DCUN1 domain) with RBX1. May also interact with regulators or subunits of cullin-RING ligases such as RNF7, ELOB and DDB1; these interactions are bridged by cullins. Interacts (via DCUN1 domain) with CAND1; this interaction is bridged by cullins and strongly inhibits cullin neddylation. These CAND-cullin-DCNL complexes can only be neddylated in the presence of a substrate adapter. Interacts (via DCUN1 domain) with the N-terminally acetylated form of UBE2M and UBE2F.

It is found in the cell membrane. It localises to the cytoplasm. The protein localises to the nucleus. Its subcellular location is the perinuclear region. Contributes to the neddylation of all cullins by transferring NEDD8 from N-terminally acetylated NEDD8-conjugating E2s enzyme to different cullin C-terminal domain-RBX complexes and may play a role in the cell cycle progression by regulating the SCF ubiquitin E3 ligase complex, after UV damage. At the cell membrane, can promote and as well inhibit cullins neddylation. The polypeptide is DCN1-like protein 3 (Bos taurus (Bovine)).